Consider the following 257-residue polypeptide: tRNA pseudouridine synthase A (257 aa).

The Nucleophile role is filled by Asp-53. Tyr-111 contributes to the substrate binding site.

Belongs to the tRNA pseudouridine synthase TruA family. In terms of assembly, homodimer.

It catalyses the reaction uridine(38/39/40) in tRNA = pseudouridine(38/39/40) in tRNA. Functionally, formation of pseudouridine at positions 38, 39 and 40 in the anticodon stem and loop of transfer RNAs. This chain is tRNA pseudouridine synthase A, found in Xylella fastidiosa (strain M23).